A 364-amino-acid chain; its full sequence is DNA polymerase IV (364 aa).

The UmuC domain maps to 14 to 198; sequence IIHIDMDAFF…LPIEKFHGVG (185 aa). The Mg(2+) site is built by D18 and D116. Residue E117 is part of the active site.

Belongs to the DNA polymerase type-Y family. In terms of assembly, monomer. It depends on Mg(2+) as a cofactor.

The protein localises to the cytoplasm. The catalysed reaction is DNA(n) + a 2'-deoxyribonucleoside 5'-triphosphate = DNA(n+1) + diphosphate. Functionally, poorly processive, error-prone DNA polymerase involved in untargeted mutagenesis. Copies undamaged DNA at stalled replication forks, which arise in vivo from mismatched or misaligned primer ends. These misaligned primers can be extended by PolIV. Exhibits no 3'-5' exonuclease (proofreading) activity. May be involved in translesional synthesis, in conjunction with the beta clamp from PolIII. The sequence is that of DNA polymerase IV from Streptococcus pyogenes serotype M4 (strain MGAS10750).